The sequence spans 459 residues: MTLPGRPTGMARPRGAGPCSPGLERAPRRSVGELRLLFEARCAAVAAAAAAGEPRARGAKRRGGQVPNGLPRAAPAPVIPQLTVTSEEDVTPASPGPPDQEGNWLPAAGSHLQQPRRLSTSSLSSTGSSSLLEDSEDDLLSDSESRSRGNVQLETSEDVGQKSHWQKIRTMVNLPVMSPFRKRYSWVQLAGHTGSFKAAGTSGLILKRSSEPEHYCLVRLMADVLRGCVPAFHGIVERDGESYLQLQDLLDGFDGPCVLDCKMGVRTYLEEELTKARERPKLRKDMYKKMLAVDPEAPTEEEHAQRAVTKPRYMQWREGISSSTTLGFRIEGIKKADGSCSTDFKTTRSREQVTRVFEEFMQGDAEVLRRYLNRLQQIRDTLEISDFFRRHEVIGSSLLFVHDHCHRAGVWLIDFGKTTPLPDGQILDHRRPWEEGNREDGYLLGLDNLIGILASLAER.

The segment at 1-29 (MTLPGRPTGMARPRGAGPCSPGLERAPRR) is disordered. Omega-N-methylarginine is present on residues Arg35, Arg55, and Arg62. The disordered stretch occupies residues 49–164 (AAAGEPRARG…TSEDVGQKSH (116 aa)). A compositionally biased stretch (low complexity) spans 116–132 (RRLSTSSLSSTGSSSLL). Residues Ser135 and Ser195 each carry the phosphoserine modification. ATP contacts are provided by residues Ser195, Lys207, 247–249 (QDL), and Asp260. Substrate is bound by residues Lys262 and Arg283. The tract at residues 285–293 (DMYKKMLAV) is calmodulin-binding. 310 to 317 (KPRYMQWR) provides a ligand contact to substrate. Lys334 and Asp414 together coordinate ATP. Lys417 is a substrate binding site.

Belongs to the inositol phosphokinase (IPK) family.

It is found in the cytoplasm. Its subcellular location is the cytoskeleton. The enzyme catalyses 1D-myo-inositol 1,4,5-trisphosphate + ATP = 1D-myo-inositol 1,3,4,5-tetrakisphosphate + ADP + H(+). Activated by calcium/calmodulin. Catalyzes the phosphorylation of 1D-myo-inositol 1,4,5-trisphosphate (InsP3) into 1D-myo-inositol 1,3,4,5-tetrakisphosphate and participates to the regulation of calcium homeostasis. The sequence is that of Inositol-trisphosphate 3-kinase A from Mus musculus (Mouse).